The primary structure comprises 855 residues: Cell surface glycoprotein (855 aa).

An N-terminal signal peptide occupies residues Met-1–Ala-22. N-linked (GlcNAc...) asparagine glycans are attached at residues Asn-78, Asn-83, Asn-108, Asn-167, Asn-174, Asn-187, Asn-203, Asn-227, Asn-230, Asn-313, Asn-363, Asn-441, Asn-548, Asn-588, Asn-608, Asn-620, Asn-642, Asn-656, and Asn-754. Residues Glu-782–Glu-802 show a composition bias toward low complexity. Positions Glu-782–Thr-831 are disordered. Acidic residues predominate over residues Glu-817–Thr-827. Residues Thr-831–Val-851 form a helical membrane-spanning segment. The PGF sorting signal signature appears at Pro-832–Phe-834.

This sequence belongs to the halobacterial S-layer protein family. Glycosylated. In terms of processing, cleaved by the archaeosortase ArtA at the C-terminus, with removal of a short hydrophobic segment. Post-translationally, lipidation.

Its subcellular location is the secreted. It localises to the cell wall. It is found in the S-layer. The protein resides in the cell membrane. S-layer protein. The S-layer is a paracrystalline mono-layered assembly of proteins which coats the surface of the cell. This is Cell surface glycoprotein from Haloferax gibbonsii.